We begin with the raw amino-acid sequence, 159 residues long: MKLNLSLQQAFKSPDLALKRAHIKKAIETTLDHVEVKTDSEIGIACVDHEQSHRLNLEYRGKDKSTNVLSFPSDIPEEVLPLLDARPLGDLVICIPVVLDEAIEQHKTAQAHFMHMLVHGTLHLLGYDHETSDEDAEEMEALEIEILAKLGLENPYQEQ.

Residues His119, His123, and His129 each coordinate Zn(2+).

It belongs to the endoribonuclease YbeY family. The cofactor is Zn(2+).

The protein resides in the cytoplasm. Single strand-specific metallo-endoribonuclease involved in late-stage 70S ribosome quality control and in maturation of the 3' terminus of the 16S rRNA. The protein is Endoribonuclease YbeY of Acinetobacter baylyi (strain ATCC 33305 / BD413 / ADP1).